Consider the following 430-residue polypeptide: Adenylosuccinate synthetase (430 aa).

Residues 12–18 and 40–42 each bind GTP; these read GDEGKGK and GHT. The Proton acceptor role is filled by D13. 2 residues coordinate Mg(2+): D13 and G40. IMP-binding positions include 13–16, 38–41, T128, R142, Q223, T238, and R302; these read DEGK and NAGH. The active-site Proton donor is the H41. 298–304 serves as a coordination point for substrate; it reads TTTGRPR. GTP-binding positions include R304, 330–332, and 412–414; these read LLD and SVG.

The protein belongs to the adenylosuccinate synthetase family. In terms of assembly, homodimer. It depends on Mg(2+) as a cofactor.

It is found in the cytoplasm. It catalyses the reaction IMP + L-aspartate + GTP = N(6)-(1,2-dicarboxyethyl)-AMP + GDP + phosphate + 2 H(+). It functions in the pathway purine metabolism; AMP biosynthesis via de novo pathway; AMP from IMP: step 1/2. Its function is as follows. Plays an important role in the de novo pathway of purine nucleotide biosynthesis. Catalyzes the first committed step in the biosynthesis of AMP from IMP. The sequence is that of Adenylosuccinate synthetase from Listeria monocytogenes serovar 1/2a (strain ATCC BAA-679 / EGD-e).